The sequence spans 1007 residues: Glutamate receptor ionotropic, delta-2 (1007 aa).

The signal sequence occupies residues 1–23 (MEVFPLLLFLSFCWSRTWDLATA). The interaction with CBLN1 homotrimer stretch occupies residues 24-345 (DSIIHIGAIF…NAFHKKLEDR (322 aa)). The Extracellular segment spans residues 24-566 (DSIIHIGAIF…DMFACLAPFD (543 aa)). 3 disulfides stabilise this stretch: C83–C355, C99–C131, and C298–C310. N-linked (GlcNAc...) asparagine glycosylation occurs at N293. An N-linked (GlcNAc...) asparagine glycan is attached at N426. The Ca(2+) site is built by E531, V534, and D535. Residues 567 to 587 (LSLWACIAGTVLLVGLLVYLL) form a helical membrane-spanning segment. Topologically, residues 588–635 (NWLNPPRLQMGSMTSTTLYNSMWFVYGSFVQQGGEVPYTTLATRMMMG) are cytoplasmic. Residues 636–656 (AWWLFALIVISSYTANLAAFL) traverse the membrane as a helical segment. Topologically, residues 657-830 (TITRIESSIQ…QKGGALDIKS (174 aa)) are extracellular. 2 N-linked (GlcNAc...) asparagine glycosylation sites follow: N713 and N716. The Ca(2+) site is built by D753, D755, and S757. Residues 831–851 (LAGVFCILAAGIVLSCLIAVL) traverse the membrane as a helical segment. Residues 852–1007 (ETWWSRRKGS…GNDPDRGTSI (156 aa)) are Cytoplasmic-facing. Residue S883 is modified to Phosphoserine. T886 is subject to Phosphothreonine. S890 is modified (phosphoserine). Positions 921 to 991 (DFRNTHITTT…MSSIPYQPTP (71 aa)) are interaction with AP4M1. The PDZ-binding motif lies at 1005–1007 (TSI). A Phosphoserine modification is found at S1006.

The protein belongs to the glutamate-gated ion channel (TC 1.A.10.1) family. GRID2 subfamily. As to quaternary structure, tetramer; dimer of dimers. Interacts with EML2, MAGI2 (via PDZ domains) and AP4M1. Interacts with BECN1, GOPC, GRID2IP, SHANK1 and SHANK2. Interacts with CBLN2, but not with CBLN4. Interacts with CBLN1 (via C1q domain); the interaction is CBLN1-NRX1 complex formation-dependent; CBLN1-binding is calcium-independent; CBLN1 hexamers anchor GRID2 N-terminal domain dimers to monomeric NRXN1 isoform beta; promotes synaptogenesis and mediates the D-Serine-dependent long term depression signals and AMPA receptor endocytosis. As to expression, expressed selectively in cerebellar Purkinje cells where it is localized in dendritic spines.

It localises to the postsynaptic cell membrane. The catalysed reaction is Ca(2+)(in) = Ca(2+)(out). The enzyme catalyses Na(+)(in) = Na(+)(out). Functionally, member of the ionotropic glutamate receptor family, which plays a crucial role in synaptic organization and signal transduction in the central nervous system. Although it shares structural features with ionotropic glutamate receptors, does not bind glutamate as a primary ligand. Promotes synaptogenesis and mediates the D-Serine-dependent long term depression signals and AMPA receptor endocytosis of cerebellar parallel fiber-Purkinje cell (PF-PC) synapses through the NRX1B-CBLN1-GRID2 triad complex. In the presence of neurexins and cerebellins, forms cation-selective channels that are proposed to be gated by glycine and D-serine. However, recent research disputes this ligand-gated cation channel activity. Cation-selective ion channel activity can be triggered by GRM1 in Purkinje cells. This is Glutamate receptor ionotropic, delta-2 (Grid2) from Mus musculus (Mouse).